Reading from the N-terminus, the 291-residue chain is tRNA dimethylallyltransferase (291 aa).

An ATP-binding site is contributed by 9–16; that stretch reads GPTASGKT. A substrate-binding site is contributed by 11 to 16; that stretch reads TASGKT. Residues 34–37 are interaction with substrate tRNA; that stretch reads DSLQ.

The protein belongs to the IPP transferase family. As to quaternary structure, monomer. Requires Mg(2+) as cofactor.

It carries out the reaction adenosine(37) in tRNA + dimethylallyl diphosphate = N(6)-dimethylallyladenosine(37) in tRNA + diphosphate. Its function is as follows. Catalyzes the transfer of a dimethylallyl group onto the adenine at position 37 in tRNAs that read codons beginning with uridine, leading to the formation of N6-(dimethylallyl)adenosine (i(6)A). The protein is tRNA dimethylallyltransferase of Onion yellows phytoplasma (strain OY-M).